Consider the following 76-residue polypeptide: Sec-independent protein translocase protein TatA (76 aa).

A helical transmembrane segment spans residues 1-21 (MGSFSIWHWLIVLLIVVLVFG). The tract at residues 44-76 (RDGSTAPADPAQQVTANKSADANTVDVEAKQKS) is disordered. Residues 55–65 (QQVTANKSADA) are compositionally biased toward polar residues.

Belongs to the TatA/E family. As to quaternary structure, the Tat system comprises two distinct complexes: a TatABC complex, containing multiple copies of TatA, TatB and TatC subunits, and a separate TatA complex, containing only TatA subunits. Substrates initially bind to the TatABC complex, which probably triggers association of the separate TatA complex to form the active translocon.

Its subcellular location is the cell inner membrane. In terms of biological role, part of the twin-arginine translocation (Tat) system that transports large folded proteins containing a characteristic twin-arginine motif in their signal peptide across membranes. TatA could form the protein-conducting channel of the Tat system. In Methylibium petroleiphilum (strain ATCC BAA-1232 / LMG 22953 / PM1), this protein is Sec-independent protein translocase protein TatA.